The sequence spans 160 residues: Serine-protein kinase RsbW (160 aa).

This sequence belongs to the anti-sigma-factor family.

It catalyses the reaction L-seryl-[protein] + ATP = O-phospho-L-seryl-[protein] + ADP + H(+). The catalysed reaction is L-threonyl-[protein] + ATP = O-phospho-L-threonyl-[protein] + ADP + H(+). Its function is as follows. Negative regulator of sigma-B activity. Phosphorylates and inactivates its specific antagonist protein, RsbV. Upon phosphorylation of RsbV, RsbW is released and binds to sigma-B, thereby blocking its ability to form an RNA polymerase holoenzyme (E-sigma-B). This is Serine-protein kinase RsbW from Bacillus licheniformis.